The primary structure comprises 331 residues: (E)-beta farnesene synthase MBR_03882 (331 aa).

This sequence belongs to the trichodiene synthase family.

The catalysed reaction is (2E,6E)-farnesyl diphosphate = (E)-beta-farnesene + diphosphate. In terms of biological role, terpene synthase that catalyzes the conversion of (2E,6E)-farnesyl diphosphate (FPP) into the volatile sesquiterpene (E)-beta-farnesene. The polypeptide is (E)-beta farnesene synthase MBR_03882 (Metarhizium brunneum (strain ARSEF 3297)).